The following is a 136-amino-acid chain: ATP synthase epsilon chain (136 aa).

Residues aspartate 95–glutamine 115 are disordered. The segment covering serine 101–glutamine 115 has biased composition (basic and acidic residues).

Belongs to the ATPase epsilon chain family. As to quaternary structure, F-type ATPases have 2 components, CF(1) - the catalytic core - and CF(0) - the membrane proton channel. CF(1) has five subunits: alpha(3), beta(3), gamma(1), delta(1), epsilon(1). CF(0) has three main subunits: a, b and c.

It localises to the cellular thylakoid membrane. In terms of biological role, produces ATP from ADP in the presence of a proton gradient across the membrane. This chain is ATP synthase epsilon chain, found in Rippkaea orientalis (strain PCC 8801 / RF-1) (Cyanothece sp. (strain PCC 8801)).